The sequence spans 1127 residues: Disease resistance protein RPS6 (1127 aa).

Met1 carries the post-translational modification N-acetylmethionine. Residues 12–176 (WSYHVFPSFS…EIANDILGKM (165 aa)) form the TIR domain. The active site involves Glu87. 11 LRR repeats span residues 197-221 (MSSL…GIGK), 540-563 (IDET…LFLK), 587-609 (PSRL…NFHP), 610-632 (ENLV…VHSL), 633-656 (AGLR…SMAT), 658-679 (LETL…IQYL), 680-704 (NKLN…NLKS), 766-790 (SPTL…IQNL), 791-813 (YQLE…GINL), 814-834 (DSLI…PDIS), and 835-857 (TNIS…IEKL).

Interacts with EDS1. Ubiquitous.

The catalysed reaction is NAD(+) + H2O = ADP-D-ribose + nicotinamide + H(+). In terms of biological role, disease resistance (R) protein that specifically recognizes the hopA1 type III effector avirulence protein from Pseudomonas syringae. Resistance proteins guard the plant against pathogens that contain an appropriate avirulence protein via an indirect interaction with this avirulence protein. That triggers a defense system including the hypersensitive response, which restricts the pathogen growth. This is Disease resistance protein RPS6 from Arabidopsis thaliana (Mouse-ear cress).